The following is a 263-amino-acid chain: uncharacterized protein (263 aa).

This sequence belongs to the A.longa ORF167/ORF288 family.

It localises to the plastid. This is an uncharacterized protein from Euglena longa (Euglenophycean alga).